Consider the following 202-residue polypeptide: Rho GDP-dissociation inhibitor (202 aa).

The residue at position 2 (Ala2) is an N-acetylalanine. Phosphothreonine is present on Thr27. Residue Ser40 is modified to Phosphoserine.

Belongs to the Rho GDI family.

Its subcellular location is the cytoplasm. Functionally, regulates the GDP/GTP exchange reaction of the Rho proteins by inhibiting the dissociation of GDP from them, and the subsequent binding of GTP to them. This is Rho GDP-dissociation inhibitor (RDI1) from Saccharomyces cerevisiae (strain ATCC 204508 / S288c) (Baker's yeast).